We begin with the raw amino-acid sequence, 135 residues long: MSLTLRVLAPDKNVFDGIAEEVILPSTTGLLGILPGHISMVTAIDTGVLRVRTNGNWDSIALMGGFAEVESDEVTVLVNAAELASEINASDAESEFEQAKTEFGQLEGQENSTQKIKAKEMLNRARARVQATKSA.

It belongs to the ATPase epsilon chain family. In terms of assembly, F-type ATPases have 2 components, CF(1) - the catalytic core - and CF(0) - the membrane proton channel. CF(1) has five subunits: alpha(3), beta(3), gamma(1), delta(1), epsilon(1). CF(0) has three main subunits: a, b and c.

The protein resides in the cellular thylakoid membrane. In terms of biological role, produces ATP from ADP in the presence of a proton gradient across the membrane. The sequence is that of ATP synthase epsilon chain from Prochlorococcus marinus (strain MIT 9211).